The following is a 501-amino-acid chain: Rhazimal synthase (501 aa).

Residues 4-24 (MQLSFASAVVYSLIFFVFLLV) traverse the membrane as a helical segment. N-linked (GlcNAc...) asparagine glycosylation is present at N282. A heme-binding site is contributed by C442.

It belongs to the cytochrome P450 family. Heme is required as a cofactor.

The protein localises to the membrane. It catalyses the reaction (19E)-geissoschizine + reduced [NADPH--hemoprotein reductase] + O2 = rhazimal + oxidized [NADPH--hemoprotein reductase] + 2 H2O + H(+). It carries out the reaction (19E)-geissoschizine + reduced [NADPH--hemoprotein reductase] + O2 = akuammicine + formate + oxidized [NADPH--hemoprotein reductase] + H2O + H(+). The protein operates within alkaloid biosynthesis. Its function is as follows. A cytochrome P450 monooxygenase involved in the biosynthesis of akuammilan monoterpene indole alkaloids (MIAs) natural products, components with various biological properties such as antidiabetic, antibacterial, anti-inflammatory, anticancer, and antimalarial activities. Catalyzes the conversion of geissoschizine to rhazimal. Can also, with lower efficiency, support the conversion of geissoschizine to akuammicine. The protein is Rhazimal synthase of Alstonia scholaris (Dogbane).